Reading from the N-terminus, the 291-residue chain is Ubiquinone biosynthesis protein COQ4, mitochondrial (291 aa).

A mitochondrion-targeting transit peptide spans 1–37; it reads MLGRRSVSLLRGLTELPVSSRAHTALRALSVPQTRRN. Positions 169, 170, 173, and 185 each coordinate Zn(2+). Over residues 271-283 the composition is skewed to basic and acidic residues; it reads PLNEAKEAAERRS. Positions 271–291 are disordered; the sequence is PLNEAKEAAERRSKTTQNQIY.

This sequence belongs to the COQ4 family. In terms of assembly, component of a multi-subunit COQ enzyme complex, composed of at least COQ3, COQ4, COQ5, COQ6, COQ7 and COQ9. Zn(2+) is required as a cofactor.

It is found in the mitochondrion inner membrane. The enzyme catalyses a 4-hydroxy-3-methoxy-5-(all-trans-polyprenyl)benzoate + H(+) = a 2-methoxy-6-(all-trans-polyprenyl)phenol + CO2. It functions in the pathway cofactor biosynthesis; ubiquinone biosynthesis. Lyase that catalyzes the C1-decarboxylation of 4-hydroxy-3-methoxy-5-(all-trans-polyprenyl)benzoic acid into 2-methoxy-6-(all-trans-polyprenyl)phenol during ubiquinone biosynthesis. The chain is Ubiquinone biosynthesis protein COQ4, mitochondrial from Coprinopsis cinerea (strain Okayama-7 / 130 / ATCC MYA-4618 / FGSC 9003) (Inky cap fungus).